The primary structure comprises 247 residues: Small ribosomal subunit protein uS2 (247 aa).

It belongs to the universal ribosomal protein uS2 family.

This is Small ribosomal subunit protein uS2 from Ralstonia pickettii (strain 12J).